A 511-amino-acid polypeptide reads, in one-letter code: 2,3-bisphosphoglycerate-independent phosphoglycerate mutase (511 aa).

Position 12 (aspartate 12) interacts with Mn(2+). A Phosphotyrosine modification is found at tyrosine 36. Serine 62 is a binding site for Mn(2+). The active-site Phosphoserine intermediate is serine 62. Residues histidine 123, 153–154 (RD), arginine 185, arginine 191, 261–264 (RPDR), and lysine 336 each bind substrate. 5 residues coordinate Mn(2+): aspartate 403, histidine 407, aspartate 444, histidine 445, and histidine 462.

This sequence belongs to the BPG-independent phosphoglycerate mutase family. In terms of assembly, monomer. Mn(2+) serves as cofactor.

The enzyme catalyses (2R)-2-phosphoglycerate = (2R)-3-phosphoglycerate. Its pathway is carbohydrate degradation; glycolysis; pyruvate from D-glyceraldehyde 3-phosphate: step 3/5. Functionally, essential for rapid growth and for sporulation. Catalyzes the interconversion of 2-phosphoglycerate and 3-phosphoglycerate. This is 2,3-bisphosphoglycerate-independent phosphoglycerate mutase from Bacillus licheniformis (strain ATCC 14580 / DSM 13 / JCM 2505 / CCUG 7422 / NBRC 12200 / NCIMB 9375 / NCTC 10341 / NRRL NRS-1264 / Gibson 46).